A 727-amino-acid polypeptide reads, in one-letter code: Elongation factor 2 (727 aa).

Residues 19–260 (DQIRNMGICA…MSIKHLPNPL (242 aa)) enclose the tr-type G domain. GTP is bound by residues 28-35 (AHIDHGKT), 94-98 (DTPGH), and 148-151 (NKVD). H603 carries the post-translational modification Diphthamide.

Belongs to the TRAFAC class translation factor GTPase superfamily. Classic translation factor GTPase family. EF-G/EF-2 subfamily.

It is found in the cytoplasm. In terms of biological role, catalyzes the GTP-dependent ribosomal translocation step during translation elongation. During this step, the ribosome changes from the pre-translocational (PRE) to the post-translocational (POST) state as the newly formed A-site-bound peptidyl-tRNA and P-site-bound deacylated tRNA move to the P and E sites, respectively. Catalyzes the coordinated movement of the two tRNA molecules, the mRNA and conformational changes in the ribosome. The sequence is that of Elongation factor 2 from Methanococcus maripaludis (strain C5 / ATCC BAA-1333).